Consider the following 410-residue polypeptide: Exodeoxyribonuclease 7 large subunit (410 aa).

The protein belongs to the XseA family. Heterooligomer composed of large and small subunits.

Its subcellular location is the cytoplasm. The catalysed reaction is Exonucleolytic cleavage in either 5'- to 3'- or 3'- to 5'-direction to yield nucleoside 5'-phosphates.. Functionally, bidirectionally degrades single-stranded DNA into large acid-insoluble oligonucleotides, which are then degraded further into small acid-soluble oligonucleotides. This is Exodeoxyribonuclease 7 large subunit from Alkaliphilus metalliredigens (strain QYMF).